Consider the following 314-residue polypeptide: Oxaloacetate tautomerase FAHD2A, mitochondrial (314 aa).

The N-terminal 84 residues, 1–84 (MLVSGRRRLL…ATLSVARRAL (84 aa)), are a transit peptide targeting the mitochondrion. 3 residues coordinate Mg(2+): Glu-159, Glu-161, and Asp-190.

It belongs to the FAH family. Mg(2+) serves as cofactor. It depends on Mn(2+) as a cofactor.

The protein resides in the mitochondrion. It catalyses the reaction oxaloacetate = enol-oxaloacetate. Its function is as follows. Tautomerase that converts enol-oxaloacetate, a strong inhibitor of succinate dehydrogenase, to the physiological keto form of oxaloacetate. It is thereby required to maximize aerobic respiration efficiency by preventing succinate dehydrogenase inhibition. The sequence is that of Oxaloacetate tautomerase FAHD2A, mitochondrial from Homo sapiens (Human).